The following is a 214-amino-acid chain: Protein-L-isoaspartate O-methyltransferase 1 (214 aa).

Ser-62 is a catalytic residue.

It belongs to the methyltransferase superfamily. L-isoaspartyl/D-aspartyl protein methyltransferase family.

Its subcellular location is the cytoplasm. The enzyme catalyses [protein]-L-isoaspartate + S-adenosyl-L-methionine = [protein]-L-isoaspartate alpha-methyl ester + S-adenosyl-L-homocysteine. Functionally, catalyzes the methyl esterification of L-isoaspartyl residues in peptides and proteins that result from spontaneous decomposition of normal L-aspartyl and L-asparaginyl residues. It plays a role in the repair and/or degradation of damaged proteins. The chain is Protein-L-isoaspartate O-methyltransferase 1 from Syntrophobacter fumaroxidans (strain DSM 10017 / MPOB).